A 150-amino-acid polypeptide reads, in one-letter code: Large ribosomal subunit protein bL9 (150 aa).

This sequence belongs to the bacterial ribosomal protein bL9 family.

Its function is as follows. Binds to the 23S rRNA. This Buchnera aphidicola subsp. Schizaphis graminum (strain Sg) protein is Large ribosomal subunit protein bL9.